The following is a 361-amino-acid chain: Peptide chain release factor 1 (361 aa).

Position 233 is an N5-methylglutamine (Q233). A disordered region spans residues 282–310; sequence SKKQAERAQNRKSQVGSGDRSERIRTYNF.

It belongs to the prokaryotic/mitochondrial release factor family. Methylated by PrmC. Methylation increases the termination efficiency of RF1.

The protein resides in the cytoplasm. Functionally, peptide chain release factor 1 directs the termination of translation in response to the peptide chain termination codons UAG and UAA. This chain is Peptide chain release factor 1, found in Treponema denticola (strain ATCC 35405 / DSM 14222 / CIP 103919 / JCM 8153 / KCTC 15104).